A 507-amino-acid chain; its full sequence is MNIVYLTTEAVPFAKTGGLADVCGTLPKVVAAQGHRCAVIMPAFSSIERSLQPIETTDISFAVPMSDQKLIGCRLLKSHLPKDPNDPEDSAEVPVYFIDQPQYFRRPSLYGDANGDYHDNAERFIFYCRAAIIAMTRLGYPVDLVHCNDWQSALVPALLRAASDNVAKTQPIATMLSIHNMAYQGNFGFDAFPWTGLSWDHFRPESFEYYNQLNFLKTGVVTSDVVSTVSPTYALEIQTPEYGCGLDSILQGIPQPVAGIINGIDTNIWNPETDPHLKRNYSVVDWADAKIDNKLALQAEVGLPQDPDVPLLGLIGRLADQKGWDLILPVLKQHLAEARPTQWVVLGSGDPKIEEQLRELTEQHPEQLAAYIGFSDALAHRIEASSDMFIMPSHYEPCGLNQLYSLRYGTPCVVTKTGGLADTIVDATPENVAANLATGFHLNDSSAGALDHAINRALQLRYHSPEKWKNLVEFGMSQDWTWRKSADQYIQLYARTISLNRRRRSGS.

An ADP-alpha-D-glucose-binding site is contributed by lysine 15.

It belongs to the glycosyltransferase 1 family. Bacterial/plant glycogen synthase subfamily.

It carries out the reaction [(1-&gt;4)-alpha-D-glucosyl](n) + ADP-alpha-D-glucose = [(1-&gt;4)-alpha-D-glucosyl](n+1) + ADP + H(+). The protein operates within glycan biosynthesis; glycogen biosynthesis. In terms of biological role, synthesizes alpha-1,4-glucan chains using ADP-glucose. This Rhodopirellula baltica (strain DSM 10527 / NCIMB 13988 / SH1) protein is Glycogen synthase.